Reading from the N-terminus, the 233-residue chain is Glycerol-3-phosphate acyltransferase (233 aa).

A run of 5 helical transmembrane segments spans residues 7 to 27 (WIIIAIICSYLIGAIPFGYII), 94 to 114 (ISIVFGAAAAIGHIKSIYIGF), 127 to 147 (VIAINPIIGLSGIGLFFIVAF), 153 to 173 (SIGSVVASFSVAVMMWIGVLI), and 185 to 205 (ISYESQIINLVAISLIVLLII).

It belongs to the PlsY family. In terms of assembly, probably interacts with PlsX.

Its subcellular location is the cell membrane. The enzyme catalyses an acyl phosphate + sn-glycerol 3-phosphate = a 1-acyl-sn-glycero-3-phosphate + phosphate. The protein operates within lipid metabolism; phospholipid metabolism. In terms of biological role, catalyzes the transfer of an acyl group from acyl-phosphate (acyl-PO(4)) to glycerol-3-phosphate (G3P) to form lysophosphatidic acid (LPA). This enzyme utilizes acyl-phosphate as fatty acyl donor, but not acyl-CoA or acyl-ACP. The polypeptide is Glycerol-3-phosphate acyltransferase (Acholeplasma laidlawii).